The chain runs to 261 residues: Glucosamine-6-phosphate deaminase (261 aa).

Asp-67 acts as the Proton acceptor; for enolization step in catalysis. Asn-135 serves as the catalytic For ring-opening step. His-137 (proton acceptor; for ring-opening step) is an active-site residue. The active-site For ring-opening step is the Glu-142.

This sequence belongs to the glucosamine/galactosamine-6-phosphate isomerase family. NagB subfamily. As to quaternary structure, homohexamer.

The catalysed reaction is alpha-D-glucosamine 6-phosphate + H2O = beta-D-fructose 6-phosphate + NH4(+). It participates in amino-sugar metabolism; N-acetylneuraminate degradation; D-fructose 6-phosphate from N-acetylneuraminate: step 5/5. Functionally, catalyzes the reversible isomerization-deamination of glucosamine 6-phosphate (GlcN6P) to form fructose 6-phosphate (Fru6P) and ammonium ion. The sequence is that of Glucosamine-6-phosphate deaminase from Hahella chejuensis (strain KCTC 2396).